A 126-amino-acid polypeptide reads, in one-letter code: C-type natriuretic peptide (126 aa).

Residues Met1–Ala23 form the signal peptide. Residues Arg19–Leu71 form a disordered region. Residues Lys24–Arg73 constitute a propeptide that is removed on maturation. Positions Gly26–Pro35 are enriched in pro residues. Residues Cys110 and Cys126 are joined by a disulfide bond.

It belongs to the natriuretic peptide family. In terms of processing, degraded by IDE (in vitro). Expressed exclusively in brain.

It is found in the secreted. Its function is as follows. Hormone which plays a role in endochondral ossification through regulation of cartilaginous growth plate chondrocytes proliferation and differentiation. May also be vasoactive and natriuretic. Acts by specifically binding and stimulating NPR2 to produce cGMP. Binds the clearance receptor NPR3. This Rattus norvegicus (Rat) protein is C-type natriuretic peptide (Nppc).